A 213-amino-acid polypeptide reads, in one-letter code: Orotate phosphoribosyltransferase (213 aa).

Residue Lys-26 participates in 5-phospho-alpha-D-ribose 1-diphosphate binding. 34 to 35 contributes to the orotate binding site; the sequence is FF. 5-phospho-alpha-D-ribose 1-diphosphate contacts are provided by residues 72 to 73, Arg-99, Lys-100, Lys-103, His-105, and 124 to 132; these read YK and DDVITAGTA. Orotate-binding residues include Thr-128 and Arg-156.

This sequence belongs to the purine/pyrimidine phosphoribosyltransferase family. PyrE subfamily. Homodimer. The cofactor is Mg(2+).

The enzyme catalyses orotidine 5'-phosphate + diphosphate = orotate + 5-phospho-alpha-D-ribose 1-diphosphate. The protein operates within pyrimidine metabolism; UMP biosynthesis via de novo pathway; UMP from orotate: step 1/2. Catalyzes the transfer of a ribosyl phosphate group from 5-phosphoribose 1-diphosphate to orotate, leading to the formation of orotidine monophosphate (OMP). The sequence is that of Orotate phosphoribosyltransferase from Pectobacterium carotovorum subsp. carotovorum (strain PC1).